The following is a 597-amino-acid chain: UvrABC system protein C (597 aa).

Positions 14–91 constitute a GIY-YIG domain; that stretch reads KKPGCYLWKD…INQYQPRFNL (78 aa).

It belongs to the UvrC family. In terms of assembly, interacts with UvrB in an incision complex.

The protein localises to the cytoplasm. The UvrABC repair system catalyzes the recognition and processing of DNA lesions. UvrC both incises the 5' and 3' sides of the lesion. The N-terminal half is responsible for the 3' incision and the C-terminal half is responsible for the 5' incision. This is UvrABC system protein C from Mycoplasma genitalium (strain ATCC 33530 / DSM 19775 / NCTC 10195 / G37) (Mycoplasmoides genitalium).